The sequence spans 479 residues: UDP-N-acetylmuramate--L-alanine ligase (479 aa).

127–133 (GTHGKTT) is an ATP binding site.

This sequence belongs to the MurCDEF family.

Its subcellular location is the cytoplasm. The enzyme catalyses UDP-N-acetyl-alpha-D-muramate + L-alanine + ATP = UDP-N-acetyl-alpha-D-muramoyl-L-alanine + ADP + phosphate + H(+). It functions in the pathway cell wall biogenesis; peptidoglycan biosynthesis. In terms of biological role, cell wall formation. This is UDP-N-acetylmuramate--L-alanine ligase from Shewanella denitrificans (strain OS217 / ATCC BAA-1090 / DSM 15013).